Reading from the N-terminus, the 178-residue chain is MSRIGNKVIVIPAGVSVEVNGATVTVKGPKGELVRSFNENITLEIAENEITVKRPNDTKEMKMLHGTTRALLANMVEGVSNGFSKALEMIGVGYRAQLQGTKLVLSVGKSHQDEVEAPENIKFVVATPTSIVVEGISKEAVGQTAAYIRSRRSPEPYKGKGIRYVGEYVRRKEGKTGK.

Belongs to the universal ribosomal protein uL6 family. Part of the 50S ribosomal subunit.

In terms of biological role, this protein binds to the 23S rRNA, and is important in its secondary structure. It is located near the subunit interface in the base of the L7/L12 stalk, and near the tRNA binding site of the peptidyltransferase center. The chain is Large ribosomal subunit protein uL6 from Lactococcus lactis subsp. cremoris (strain MG1363).